Consider the following 617-residue polypeptide: Protelomerase (617 aa).

The DNA site is built by Arg270, Lys295, Arg376, and His409. The active-site Nucleophile is the Tyr418. Acidic residues predominate over residues 535-562; sequence DAEEDEIEEDFTDEEIDDTEFDVSDNAS. The disordered stretch occupies residues 535–575; that stretch reads DAEEDEIEEDFTDEEIDDTEFDVSDNASDEDKPEDKPRFAA. Basic and acidic residues predominate over residues 563 to 575; the sequence is DEDKPEDKPRFAA.

The protein belongs to the Caudoviricetes Protelomerase family. As to quaternary structure, monomer. Homodimer; in presence of DNA.

In terms of biological role, converts the circular intermediates produced by the viral replication and carrying a joined telomere site to a linear DNA molecule with covalently closed hairpin ends. The viral circular DNA is cleaved at a palindromic site called telRL thereby generating a linear prophage plasmid with telomeres. Binds covalently to the 3'-phosphoryl of the cleaved strands. This is Protelomerase (tel) from Yersinia enterocolitica (Bacteriophage PY54).